The primary structure comprises 184 residues: 3-hydroxyanthranilate 3,4-dioxygenase (184 aa).

An O2-binding site is contributed by Arg44. Fe cation-binding residues include His48, Glu54, and His92. Glu54 contributes to the substrate binding site. Substrate-binding residues include Arg96 and Glu106. Positions 121, 126, 162, and 165 each coordinate a divalent metal cation.

It belongs to the 3-HAO family. It depends on Fe(2+) as a cofactor.

It localises to the cytoplasm. The catalysed reaction is 3-hydroxyanthranilate + O2 = (2Z,4Z)-2-amino-3-carboxymuconate 6-semialdehyde. It participates in cofactor biosynthesis; NAD(+) biosynthesis; quinolinate from L-kynurenine: step 3/3. Its function is as follows. Catalyzes the oxidative ring opening of 3-hydroxyanthranilate to 2-amino-3-carboxymuconate semialdehyde, which spontaneously cyclizes to quinolinate. This chain is 3-hydroxyanthranilate 3,4-dioxygenase, found in Pyricularia oryzae (strain 70-15 / ATCC MYA-4617 / FGSC 8958) (Rice blast fungus).